The primary structure comprises 377 residues: Succinyl-diaminopimelate desuccinylase (377 aa).

Position 75 (His75) interacts with Zn(2+). The active site involves Asp77. Asp106 contributes to the Zn(2+) binding site. The active-site Proton acceptor is Glu136. Zn(2+)-binding residues include Glu137, Glu165, and His350.

It belongs to the peptidase M20A family. DapE subfamily. Homodimer. It depends on Zn(2+) as a cofactor. Co(2+) serves as cofactor.

It carries out the reaction N-succinyl-(2S,6S)-2,6-diaminopimelate + H2O = (2S,6S)-2,6-diaminopimelate + succinate. Its pathway is amino-acid biosynthesis; L-lysine biosynthesis via DAP pathway; LL-2,6-diaminopimelate from (S)-tetrahydrodipicolinate (succinylase route): step 3/3. Its function is as follows. Catalyzes the hydrolysis of N-succinyl-L,L-diaminopimelic acid (SDAP), forming succinate and LL-2,6-diaminopimelate (DAP), an intermediate involved in the bacterial biosynthesis of lysine and meso-diaminopimelic acid, an essential component of bacterial cell walls. This chain is Succinyl-diaminopimelate desuccinylase, found in Sphingopyxis alaskensis (strain DSM 13593 / LMG 18877 / RB2256) (Sphingomonas alaskensis).